We begin with the raw amino-acid sequence, 109 residues long: Tyrosine-protein phosphatase 16 (109 aa).

The Tyrosine-protein phosphatase domain occupies 1 to 109 (WRMVTEHTST…RIKTQKPIVV (109 aa)). D81 contacts substrate.

The protein belongs to the protein-tyrosine phosphatase family.

It carries out the reaction O-phospho-L-tyrosyl-[protein] + H2O = L-tyrosyl-[protein] + phosphate. This Styela plicata (Wrinkled sea squirt) protein is Tyrosine-protein phosphatase 16 (STY-16).